Consider the following 203-residue polypeptide: Acid phosphatase (203 aa).

Catalysis depends on His13, which acts as the Tele-phosphohistidine intermediate. Glu85 functions as the Proton donor/acceptor in the catalytic mechanism.

It belongs to the phosphoglycerate mutase family. Homodimer.

The enzyme catalyses a phosphate monoester + H2O = an alcohol + phosphate. It carries out the reaction beta-D-fructose 1,6-bisphosphate + H2O = beta-D-fructose 6-phosphate + phosphate. It functions in the pathway carbohydrate biosynthesis; gluconeogenesis. With respect to regulation, in contrast to classical FBPases, is resistant to inhibition by lithium. Phosphatase with a broad specificity. Can dephosphorylate a variety of substrates including phosphorylated sugars like fructose-6-phosphate (F6P). Is able to function in vivo as a fructose-1,6-bisphosphatase (FBPase) and to maintain gluconeogenesis when the classical FBPase GlpX is absent. Shows negligible phosphoglycerate mutase activity. Has no phosphatase activity against 3-phosphoglycerate, 2,3-bisphosphoglycerate, or hydrophobic substrates such as alpha-napthyl phosphate. The polypeptide is Acid phosphatase (Mycobacterium tuberculosis (strain ATCC 25618 / H37Rv)).